The primary structure comprises 670 residues: Protein HBS1 (670 aa).

Disordered stretches follow at residues 60–88 and 164–202; these read KDIQ…ESFQ and KTVS…VSGR. Acidic residues predominate over residues 63-75; the sequence is QEEEADEDEDEDA. The segment covering 189-200 has biased composition (low complexity); it reads PSPKVPSSPVVS. The region spanning 245 to 468 is the tr-type G domain; that stretch reads KSHIHMIVIG…DVIENFKIPE (224 aa). The tract at residues 254 to 261 is G1; sequence GHVDAGKS. Position 254 to 261 (254 to 261) interacts with GTP; sequence GHVDAGKS. The segment at 310-314 is G2; that stretch reads GITMD. The G3 stretch occupies residues 331-334; that stretch reads DAPG. Residues 393 to 396 and 432 to 434 each bind GTP; these read NKLD and SGL. The interval 393–396 is G4; it reads NKLD. The tract at residues 432–434 is G5; that stretch reads SGL.

This sequence belongs to the TRAFAC class translation factor GTPase superfamily. Classic translation factor GTPase family. Component of the Pelota-HBS1L complex, also named Dom34-Hbs1 complex, composed of pelo and HBS1. In terms of tissue distribution, expressed in ovaries (at protein level).

The protein resides in the cytoplasm. The catalysed reaction is GTP + H2O = GDP + phosphate + H(+). Its function is as follows. GTPase component of the Pelota-HBS1L complex, a complex that recognizes stalled ribosomes and triggers the No-Go Decay (NGD) pathway. The Pelota-HBS1L complex recognizes ribosomes stalled at the 3' end of an mRNA and engages stalled ribosomes by destabilizing mRNA in the mRNA channel. Following ribosome-binding, the Pelota-HBS1L complex promotes recruitment of pix, which drives the disassembly of stalled ribosomes, followed by degradation of damaged mRNAs as part of the NGD pathway. Together with pelo, required for transposon silencing in the ovary and testis. Together with pelo, promotes meiosis and spermatid individualization during spermatogenesis. The polypeptide is Protein HBS1 (Drosophila melanogaster (Fruit fly)).